The following is a 171-amino-acid chain: Crossover junction endodeoxyribonuclease RuvC (171 aa).

Active-site residues include Asp11, Glu71, and Asp143. Residues Asp11, Glu71, and Asp143 each contribute to the Mg(2+) site.

The protein belongs to the RuvC family. In terms of assembly, homodimer which binds Holliday junction (HJ) DNA. The HJ becomes 2-fold symmetrical on binding to RuvC with unstacked arms; it has a different conformation from HJ DNA in complex with RuvA. In the full resolvosome a probable DNA-RuvA(4)-RuvB(12)-RuvC(2) complex forms which resolves the HJ. Requires Mg(2+) as cofactor.

Its subcellular location is the cytoplasm. The enzyme catalyses Endonucleolytic cleavage at a junction such as a reciprocal single-stranded crossover between two homologous DNA duplexes (Holliday junction).. Functionally, the RuvA-RuvB-RuvC complex processes Holliday junction (HJ) DNA during genetic recombination and DNA repair. Endonuclease that resolves HJ intermediates. Cleaves cruciform DNA by making single-stranded nicks across the HJ at symmetrical positions within the homologous arms, yielding a 5'-phosphate and a 3'-hydroxyl group; requires a central core of homology in the junction. The consensus cleavage sequence is 5'-(A/T)TT(C/G)-3'. Cleavage occurs on the 3'-side of the TT dinucleotide at the point of strand exchange. HJ branch migration catalyzed by RuvA-RuvB allows RuvC to scan DNA until it finds its consensus sequence, where it cleaves and resolves the cruciform DNA. The sequence is that of Crossover junction endodeoxyribonuclease RuvC from Chelativorans sp. (strain BNC1).